Consider the following 1058-residue polypeptide: Leucine--tRNA ligase, cytoplasmic (1058 aa).

The 'HIGH' region motif lies at 48-58; sequence PYMNGRLHVGH. The 'KMSKS' region motif lies at 711–715; sequence KMSKS. K714 contributes to the ATP binding site.

The protein belongs to the class-I aminoacyl-tRNA synthetase family.

The protein localises to the cytoplasm. It carries out the reaction tRNA(Leu) + L-leucine + ATP = L-leucyl-tRNA(Leu) + AMP + diphosphate. In Dictyostelium discoideum (Social amoeba), this protein is Leucine--tRNA ligase, cytoplasmic (leuS).